A 317-amino-acid polypeptide reads, in one-letter code: MERATREREKEQREQAQTNDEAQQCPECNSANVITDQSERVCEDCGLVLEDDQIDHGPEWRAFNSSERDQKSRVGAPTTKTMHDKGLTTQIDWKDKDAYGRSLDAKKRNQMNRLRKWQERIRTKDAGERNLQFALSEIDRMASALGVPRSVREVASVIYRRALKEDLIRGRSIEGVATACLYAACRQEGIPRTLEEVTEVARIDQKEIGRTYRYVAQELSLEIQPTDPKEYLPRFASDLELSEEVIAKAREIIDTSAEQGLLSGKSPSGFAAAAIYAASLLCNEKKTQREVANVANVTEVTIRNRYQEQIEAMGFGV.

The span at 1–14 (MERATREREKEQRE) shows a compositional bias: basic and acidic residues. The tract at residues 1–25 (MERATREREKEQREQAQTNDEAQQC) is disordered. The TFIIB-type zinc-finger motif lies at 21-50 (EAQQCPECNSANVITDQSERVCEDCGLVLE). Cysteine 25, cysteine 28, cysteine 42, and cysteine 45 together coordinate Zn(2+). The disordered stretch occupies residues 62 to 83 (AFNSSERDQKSRVGAPTTKTMH). A run of 2 repeats spans residues 136 to 219 (SEID…AQEL) and 230 to 311 (EYLP…EQIE).

It belongs to the TFIIB family.

Stabilizes TBP binding to an archaeal box-A promoter. Also responsible for recruiting RNA polymerase II to the pre-initiation complex (DNA-TBP-TFIIB). The sequence is that of Transcription initiation factor IIB 3 from Halobacterium salinarum (strain ATCC 700922 / JCM 11081 / NRC-1) (Halobacterium halobium).